A 410-amino-acid chain; its full sequence is Dihydrolipoyllysine-residue acetyltransferase component of pyruvate dehydrogenase complex (410 aa).

Positions 1–69 (MPDIGTDLVE…TTGSLIAILN (69 aa)) constitute a Lipoyl-binding domain. An N6-lipoyllysine modification is found at lysine 35. Positions 81-100 (SSSYSFKNSKNTSTNSNLGN) are disordered. Residues 113-150 (HATPTVRRLARKFDIKLENITGTGRKGRILKEDVISYK) form the Peripheral subunit-binding (PSBD) domain. Histidine 383 is a catalytic residue.

The protein belongs to the 2-oxoacid dehydrogenase family. In terms of assembly, forms a 24-polypeptide structural core with octahedral symmetry. Requires (R)-lipoate as cofactor.

It catalyses the reaction N(6)-[(R)-dihydrolipoyl]-L-lysyl-[protein] + acetyl-CoA = N(6)-[(R)-S(8)-acetyldihydrolipoyl]-L-lysyl-[protein] + CoA. Functionally, the pyruvate dehydrogenase complex catalyzes the overall conversion of pyruvate to acetyl-CoA and CO(2). It contains multiple copies of three enzymatic components: pyruvate dehydrogenase (E1), dihydrolipoamide acetyltransferase (E2) and lipoamide dehydrogenase (E3). The sequence is that of Dihydrolipoyllysine-residue acetyltransferase component of pyruvate dehydrogenase complex (aceF) from Buchnera aphidicola subsp. Baizongia pistaciae (strain Bp).